Consider the following 421-residue polypeptide: MKFFKITTLIISLIVLTSCQGPGVNGDEDRKQVTILGVMIGEQQEKIEQALAPFTEATGIEVVYEGVDTFATTLPIRVDSGRAPDLAMFPQPGLMADFAREGKLVPLGEILTPEEMTEAYDQAWLDLAAVDGTVYGVWYRASVKSLVWFNPQEFAANGYEVPGTWEEMMALSQRLIDKGKTPWCLGIESGNATGWVGTDWVEDIMLRTASPATYDQWVAHDIPFNDRRVENALDIFGEITQNEKMIYGGKVGALSTPFGDSILGLFTDPPHCYLHRQGNFIAAFLPADVDDDQVDIFPLPPIEEEYGLPILVAGDIFAMFNDTPEARQLMAYLASSRPHEVAATLGAYISPHKNIDLNLYPDRLTRKQAEILNKAEVIRFDASDMMPGAVGTGTFWSGMVDYIGGADGTQVLNTIERSWPR.

The signal sequence occupies residues 1-18 (MKFFKITTLIISLIVLTS). Cysteine 19 carries the N-palmitoyl cysteine lipid modification. Cysteine 19 is lipidated: S-diacylglycerol cysteine.

Belongs to the bacterial solute-binding protein 1 family. As to quaternary structure, the complex is composed of two ATP-binding proteins (GgtA), two transmembrane proteins (GgtC and GgtD) and a solute-binding protein (GgtB).

The protein localises to the cell membrane. Functionally, part of the ABC transporter complex GgtABCD involved in the uptake of the osmoprotective compounds glucosylglycerol (GG), sucrose and trehalose. Binds glucosylglycerol and exhibits a somewhat lower affinity towards sucrose and a substantially lower affinity towards trehalose. The chain is Osmoprotective compounds-binding protein GgtB from Synechocystis sp. (strain ATCC 27184 / PCC 6803 / Kazusa).